An 810-amino-acid polypeptide reads, in one-letter code: Type I restriction enzyme EcoAI endonuclease subunit (810 aa).

One can recognise a Helicase ATP-binding domain in the interval 183–343 (EAVSNGQNRV…TDYFGDPVYV (161 aa)). Residue 197-203 (ATGTGKT) participates in ATP binding. Residues 412–575 (TITDYLKRTN…DIADPESDFE (164 aa)) form the Helicase C-terminal domain. Positions 578 to 588 (LEEISEHDEEQ) are enriched in acidic residues. Residues 578 to 608 (LEEISEHDEEQVTGVDEPPAPPYQVTDTDDV) are disordered.

Belongs to the HsdR family. As to quaternary structure, the type I restriction/modification system is composed of three polypeptides R, M and S. The restriction enzyme has stoichiometry R(2)M(2)S(1) while the methyltransferase is M(2)S(1).

The enzyme catalyses Endonucleolytic cleavage of DNA to give random double-stranded fragments with terminal 5'-phosphates, ATP is simultaneously hydrolyzed.. Functionally, the subtype B restriction (R) subunit of a type I restriction enzyme that recognizes 5'-GAGN(7)GTCA-3' and cleaves a random distance away. Subunit R is required for both nuclease and ATPase activities, but not for modification. After locating a non-methylated recognition site, the enzyme complex serves as a molecular motor that translocates DNA in an ATP-dependent manner until a collision occurs that triggers cleavage. The polypeptide is Type I restriction enzyme EcoAI endonuclease subunit (Escherichia coli).